The primary structure comprises 173 residues: ATP synthase subunit b (173 aa).

A helical membrane pass occupies residues 15-35 (LYVGDMLFYAILFIVLMALIA).

It belongs to the ATPase B chain family. As to quaternary structure, F-type ATPases have 2 components, F(1) - the catalytic core - and F(0) - the membrane proton channel. F(1) has five subunits: alpha(3), beta(3), gamma(1), delta(1), epsilon(1). F(0) has three main subunits: a(1), b(2) and c(10-14). The alpha and beta chains form an alternating ring which encloses part of the gamma chain. F(1) is attached to F(0) by a central stalk formed by the gamma and epsilon chains, while a peripheral stalk is formed by the delta and b chains.

It is found in the cell membrane. In terms of biological role, f(1)F(0) ATP synthase produces ATP from ADP in the presence of a proton or sodium gradient. F-type ATPases consist of two structural domains, F(1) containing the extramembraneous catalytic core and F(0) containing the membrane proton channel, linked together by a central stalk and a peripheral stalk. During catalysis, ATP synthesis in the catalytic domain of F(1) is coupled via a rotary mechanism of the central stalk subunits to proton translocation. Component of the F(0) channel, it forms part of the peripheral stalk, linking F(1) to F(0). This is ATP synthase subunit b from Pediococcus pentosaceus (strain ATCC 25745 / CCUG 21536 / LMG 10740 / 183-1w).